The sequence spans 81 residues: Small ribosomal subunit protein bS20 (81 aa).

Belongs to the bacterial ribosomal protein bS20 family.

Its function is as follows. Binds directly to 16S ribosomal RNA. The chain is Small ribosomal subunit protein bS20 from Mycoplasma mycoides subsp. mycoides SC (strain CCUG 32753 / NCTC 10114 / PG1).